The primary structure comprises 305 residues: tRNA uridine(34) hydroxylase (305 aa).

The region spanning 125 to 219 is the Rhodanese domain; it reads ADENTVVVDT…YLEEVPREQS (95 aa). Residue Cys-179 is the Cysteine persulfide intermediate of the active site.

The protein belongs to the TrhO family.

It carries out the reaction uridine(34) in tRNA + AH2 + O2 = 5-hydroxyuridine(34) in tRNA + A + H2O. Its function is as follows. Catalyzes oxygen-dependent 5-hydroxyuridine (ho5U) modification at position 34 in tRNAs. The chain is tRNA uridine(34) hydroxylase from Brucella ovis (strain ATCC 25840 / 63/290 / NCTC 10512).